The chain runs to 35 residues: N-acylglucosamine 2-epimerase (35 aa).

Positions 1–21 (LNLVDQLGEADEELAGTYAEL) are leucine-zipper.

This sequence belongs to the N-acylglucosamine 2-epimerase family. In terms of assembly, homodimer. Forms a heterodimer with renin and inhibits its activity.

It carries out the reaction an N-acyl-D-glucosamine = an N-acyl-D-mannosamine. The protein operates within amino-sugar metabolism; N-acetylneuraminate degradation. In terms of biological role, catalyzes the interconversion of N-acetylglucosamine to N-acetylmannosamine. Involved in the N-glycolylneuraminic acid (Neu5Gc) degradation pathway. The chain is N-acylglucosamine 2-epimerase from Canis lupus familiaris (Dog).